We begin with the raw amino-acid sequence, 324 residues long: MKQVNGQKLLDALGNGVSAIRGRITPDAPMDRVTWFRAGGLAELMFQPHDTDDLVAFLKLVPEEVPVMVIGVGSNLLVRDGGIPGVVIRLSAKGFGDLEIVGENRIKAGAICPDKNIAAMALDHGIGGFYFYYGIPGSIGGALRMNAGANGGETRERVVEVHAVDRRGNRHVLSNADMGYSYRHTAAAKDLIFTHAIFEGFPEDKAKIRHDMDAVRQHRETVQPIREKTGGSTFKNPEGNSAWKLIDEAGGRGMMIGGAQMSPLHCNFMINTGQASGYELEYLGETVRAQVLEHSGIKLEWEIKRIGKFMPGYEIKEFLGRADG.

An FAD-binding PCMH-type domain is found at 36-203; sequence FRAGGLAELM…THAIFEGFPE (168 aa). Residue Arg183 is part of the active site. The active-site Proton donor is the Ser232. Glu302 is an active-site residue.

This sequence belongs to the MurB family. It depends on FAD as a cofactor.

The protein resides in the cytoplasm. It carries out the reaction UDP-N-acetyl-alpha-D-muramate + NADP(+) = UDP-N-acetyl-3-O-(1-carboxyvinyl)-alpha-D-glucosamine + NADPH + H(+). Its pathway is cell wall biogenesis; peptidoglycan biosynthesis. Its function is as follows. Cell wall formation. The chain is UDP-N-acetylenolpyruvoylglucosamine reductase from Sinorhizobium fredii (strain NBRC 101917 / NGR234).